The following is a 78-amino-acid chain: UPF0270 protein YPO0179/y3960/YP_0178 (78 aa).

Belongs to the UPF0270 family.

This is UPF0270 protein YPO0179/y3960/YP_0178 from Yersinia pestis.